Consider the following 226-residue polypeptide: 2-C-methyl-D-erythritol 4-phosphate cytidylyltransferase (226 aa).

It belongs to the IspD/TarI cytidylyltransferase family. IspD subfamily.

It catalyses the reaction 2-C-methyl-D-erythritol 4-phosphate + CTP + H(+) = 4-CDP-2-C-methyl-D-erythritol + diphosphate. Its pathway is isoprenoid biosynthesis; isopentenyl diphosphate biosynthesis via DXP pathway; isopentenyl diphosphate from 1-deoxy-D-xylulose 5-phosphate: step 2/6. Its function is as follows. Catalyzes the formation of 4-diphosphocytidyl-2-C-methyl-D-erythritol from CTP and 2-C-methyl-D-erythritol 4-phosphate (MEP). The polypeptide is 2-C-methyl-D-erythritol 4-phosphate cytidylyltransferase (Trichodesmium erythraeum (strain IMS101)).